A 251-amino-acid polypeptide reads, in one-letter code: MVDQTPETTHFGYKTVAAADKAGKVAQVFHSVAGKYDLMNDLMSFGIHRLWKRFTIDCSGVRQGQRVLDLAGGTGDLAARFSRMVGEQGEVILADINDSMLKIGREKLRNMGIVGNLNYVQANAEALPFPENYFDCITIAFGLRNVTDKDKALRSMFRVLKPGGRLLVLEFSRPQFVALSKAYDAYSFHILPRIGEMVAHDGDSYRYLAESIRMHPDQETLKGMMAAAGFENTTYDNLTGGIVALHRGYKF.

Residues Thr-74, Asp-95, and Asn-123 to Ala-124 each bind S-adenosyl-L-methionine.

The protein belongs to the class I-like SAM-binding methyltransferase superfamily. MenG/UbiE family.

The enzyme catalyses a 2-demethylmenaquinol + S-adenosyl-L-methionine = a menaquinol + S-adenosyl-L-homocysteine + H(+). It catalyses the reaction a 2-methoxy-6-(all-trans-polyprenyl)benzene-1,4-diol + S-adenosyl-L-methionine = a 5-methoxy-2-methyl-3-(all-trans-polyprenyl)benzene-1,4-diol + S-adenosyl-L-homocysteine + H(+). It functions in the pathway quinol/quinone metabolism; menaquinone biosynthesis; menaquinol from 1,4-dihydroxy-2-naphthoate: step 2/2. The protein operates within cofactor biosynthesis; ubiquinone biosynthesis. Methyltransferase required for the conversion of demethylmenaquinol (DMKH2) to menaquinol (MKH2) and the conversion of 2-polyprenyl-6-methoxy-1,4-benzoquinol (DDMQH2) to 2-polyprenyl-3-methyl-6-methoxy-1,4-benzoquinol (DMQH2). The chain is Ubiquinone/menaquinone biosynthesis C-methyltransferase UbiE from Edwardsiella ictaluri (strain 93-146).